The sequence spans 294 residues: RNA polymerase sigma-K factor (294 aa).

A propeptide spanning residues 1–20 (MVTGVFAALGFVVKELVFLV) is cleaved from the precursor. The encoded by spoIVCB stretch occupies residues 1–156 (MVTGVFAALG…VNNCFFIFKS (156 aa)). The Polymerase core binding motif lies at 79–92 (DLISIGTIGLIKGI). The tract at residues 114-165 (EIVITKGGCIHPSLIRFNIYGVRIHNGNFFHDKVNNCFFIFKSMPPLFVMNN) is not present in recombined mature factor. Residues 157 to 294 (MPPLFVMNNE…KEKRKKAKGK (138 aa)) form an encoded by spoIIIC region. Residues 251 to 270 (QREIAKELGISRSYVSRIEK) constitute a DNA-binding region (H-T-H motif).

It belongs to the sigma-70 factor family.

Sigma factors are initiation factors that promote the attachment of RNA polymerase to specific initiation sites and are then released. This sigma factor is responsible for the expression of sporulation specific genes in the mother cell. This Bacillus subtilis (strain 168) protein is RNA polymerase sigma-K factor (sigK).